A 385-amino-acid chain; its full sequence is 1-deoxy-D-xylulose 5-phosphate reductoisomerase (385 aa).

Threonine 11, glycine 12, serine 13, isoleucine 14, alanine 37, arginine 38, asparagine 39, and asparagine 123 together coordinate NADPH. 1-deoxy-D-xylulose 5-phosphate is bound at residue lysine 124. Glutamate 125 serves as a coordination point for NADPH. Aspartate 149 lines the Mn(2+) pocket. 1-deoxy-D-xylulose 5-phosphate contacts are provided by serine 150, glutamate 151, serine 173, and histidine 196. Glutamate 151 lines the Mn(2+) pocket. Glycine 202 lines the NADPH pocket. Positions 209, 214, 215, and 218 each coordinate 1-deoxy-D-xylulose 5-phosphate. Glutamate 218 is a binding site for Mn(2+).

It belongs to the DXR family. The cofactor is Mg(2+). Mn(2+) is required as a cofactor.

The catalysed reaction is 2-C-methyl-D-erythritol 4-phosphate + NADP(+) = 1-deoxy-D-xylulose 5-phosphate + NADPH + H(+). The protein operates within isoprenoid biosynthesis; isopentenyl diphosphate biosynthesis via DXP pathway; isopentenyl diphosphate from 1-deoxy-D-xylulose 5-phosphate: step 1/6. In terms of biological role, catalyzes the NADPH-dependent rearrangement and reduction of 1-deoxy-D-xylulose-5-phosphate (DXP) to 2-C-methyl-D-erythritol 4-phosphate (MEP). The chain is 1-deoxy-D-xylulose 5-phosphate reductoisomerase from Moorella thermoacetica (strain ATCC 39073 / JCM 9320).